We begin with the raw amino-acid sequence, 208 residues long: Ribonuclease HII (208 aa).

The 190-residue stretch at 13-202 (DLVAGVDEVG…VRQAYEAREA (190 aa)) folds into the RNase H type-2 domain. A divalent metal cation contacts are provided by Asp-19, Glu-20, and Asp-111.

It belongs to the RNase HII family. Requires Mn(2+) as cofactor. It depends on Mg(2+) as a cofactor.

The protein localises to the cytoplasm. It catalyses the reaction Endonucleolytic cleavage to 5'-phosphomonoester.. Its function is as follows. Endonuclease that specifically degrades the RNA of RNA-DNA hybrids. The chain is Ribonuclease HII from Pseudomonas fluorescens (strain ATCC BAA-477 / NRRL B-23932 / Pf-5).